The chain runs to 319 residues: Ribosomal protein uL3 glutamine methyltransferase (319 aa).

The protein belongs to the protein N5-glutamine methyltransferase family. PrmB subfamily.

The enzyme catalyses L-glutaminyl-[ribosomal protein uL3] + S-adenosyl-L-methionine = N(5)-methyl-L-glutaminyl-[ribosomal protein uL3] + S-adenosyl-L-homocysteine + H(+). Methylates large ribosomal subunit protein uL3 on a specific glutamine residue. The sequence is that of Ribosomal protein uL3 glutamine methyltransferase from Bradyrhizobium diazoefficiens (strain JCM 10833 / BCRC 13528 / IAM 13628 / NBRC 14792 / USDA 110).